The sequence spans 874 residues: S-layer protein (874 aa).

The signal sequence occupies residues 1 to 30 (MAKTNSYKKVIAGTMTAAMVAGVVSPVAAA). SLH domains are found at residues 31–93 (GKSF…NAQP), 94–151 (SFKD…KVDG), and 152–214 (TLVT…ENSD).

It is found in the secreted. The protein localises to the cell wall. It localises to the S-layer. Its function is as follows. The S-layer is a paracrystalline mono-layered assembly of proteins which coat the surface of bacteria. In Bacillus licheniformis, this protein is S-layer protein.